Consider the following 458-residue polypeptide: ATP synthase subunit beta (458 aa).

Position 148-155 (148-155) interacts with ATP; that stretch reads GGAGVGKT.

It belongs to the ATPase alpha/beta chains family. In terms of assembly, F-type ATPases have 2 components, CF(1) - the catalytic core - and CF(0) - the membrane proton channel. CF(1) has five subunits: alpha(3), beta(3), gamma(1), delta(1), epsilon(1). CF(0) has three main subunits: a(1), b(2) and c(9-12). The alpha and beta chains form an alternating ring which encloses part of the gamma chain. CF(1) is attached to CF(0) by a central stalk formed by the gamma and epsilon chains, while a peripheral stalk is formed by the delta and b chains.

Its subcellular location is the cell inner membrane. The catalysed reaction is ATP + H2O + 4 H(+)(in) = ADP + phosphate + 5 H(+)(out). Functionally, produces ATP from ADP in the presence of a proton gradient across the membrane. The catalytic sites are hosted primarily by the beta subunits. The polypeptide is ATP synthase subunit beta (Shewanella pealeana (strain ATCC 700345 / ANG-SQ1)).